The sequence spans 248 residues: Probable transcriptional regulatory protein Syncc9902_0542 (248 aa).

This sequence belongs to the TACO1 family.

The protein localises to the cytoplasm. This chain is Probable transcriptional regulatory protein Syncc9902_0542, found in Synechococcus sp. (strain CC9902).